Here is a 719-residue protein sequence, read N- to C-terminus: Acyl-coenzyme A oxidase (719 aa).

The Microbody targeting signal signature appears at 716–719; the sequence is APKI.

Belongs to the acyl-CoA oxidase family. Requires FAD as cofactor.

It localises to the peroxisome. It carries out the reaction a 2,3-saturated acyl-CoA + O2 = a (2E)-enoyl-CoA + H2O2. It participates in lipid metabolism; peroxisomal fatty acid beta-oxidation. The polypeptide is Acyl-coenzyme A oxidase (POX1) (Komagataella pastoris (Yeast)).